Here is a 189-residue protein sequence, read N- to C-terminus: Putative manganese efflux pump MntP (189 aa).

The next 6 membrane-spanning stretches (helical) occupy residues P3 to G23, I41 to A61, V65 to I85, W106 to F128, G141 to V161, and M168 to A188.

This sequence belongs to the MntP (TC 9.B.29) family.

The protein resides in the cell inner membrane. Functionally, probably functions as a manganese efflux pump. The protein is Putative manganese efflux pump MntP of Pseudomonas aeruginosa (strain UCBPP-PA14).